The primary structure comprises 197 residues: Putative RNA-binding protein EEED8.12 (197 aa).

Positions 61-138 (KSVFIGNVDF…RPIVVTAKRT (78 aa)) constitute an RRM domain. Residues 142-166 (GMGHGVRGSSRGTFGRGRGAARGAP) are disordered.

In Caenorhabditis elegans, this protein is Putative RNA-binding protein EEED8.12.